Here is a 106-residue protein sequence, read N- to C-terminus: Large ribosomal subunit protein eL42 (106 aa).

This sequence belongs to the eukaryotic ribosomal protein eL42 family.

The sequence is that of Large ribosomal subunit protein eL42 (RPL44) from Schwanniomyces occidentalis (Yeast).